The primary structure comprises 142 residues: ATP synthase epsilon chain (142 aa).

The protein belongs to the ATPase epsilon chain family. In terms of assembly, F-type ATPases have 2 components, CF(1) - the catalytic core - and CF(0) - the membrane proton channel. CF(1) has five subunits: alpha(3), beta(3), gamma(1), delta(1), epsilon(1). CF(0) has three main subunits: a, b and c.

The protein resides in the cell inner membrane. Functionally, produces ATP from ADP in the presence of a proton gradient across the membrane. The chain is ATP synthase epsilon chain from Coxiella burnetii (strain CbuK_Q154) (Coxiella burnetii (strain Q154)).